The chain runs to 1378 residues: Hybrid signal transduction histidine kinase H (1378 aa).

Positions 212–242 (KEKFKKEELINDFKSRLETLENKIDQRVDER) form a coiled coil. Residues 243-314 (IETRFKYVLE…NNNNNNNNNN (72 aa)) enclose the PAS domain. A disordered region spans residues 294–337 (YQQHNNNNNNNNNNNNNNNNNNNNNSNNKSPIINSPNTTSPTNT). Positions 298-337 (NNNNNNNNNNNNNNNNNNNNNSNNKSPIINSPNTTSPTNT) are enriched in low complexity. The 308-residue stretch at 498-805 (TMSHEMRTPL…SFHFLVEVFF (308 aa)) folds into the Histidine kinase domain. H501 is modified (phosphohistidine; by autocatalysis). Residues 663–696 (NNSNNSNNNHNHNNNNNNNNHLNCSGSFNNNGFN) show a composition bias toward low complexity. Disordered stretches follow at residues 663–717 (NNSN…DKHC), 905–924 (TNNNNSNNDNNNNNTTSTTT), and 1103–1213 (NNSN…HPNP). Residues 697 to 714 (HGHHHHHHHHHHHHHHHD) are compositionally biased toward basic residues. Composition is skewed to low complexity over residues 1103–1119 (NNSNNNINNNNNNSGSS) and 1136–1187 (SPSL…NNNN). Residues 1188–1206 (LNHYNSDSILSSDLSPQQH) are compositionally biased toward polar residues. Positions 1244-1364 (KIMVAEDSLV…ILAVELKRAW (121 aa)) constitute a Response regulatory domain. 4-aspartylphosphate is present on D1297.

Post-translationally, activation probably requires transfer of a phosphate group between a histidine in the kinase core (transmitter) domain and an aspartate of the receiver domain.

It catalyses the reaction ATP + protein L-histidine = ADP + protein N-phospho-L-histidine.. Its function is as follows. Acts as a receptor histidine kinase for a signal transduction pathway. This protein undergoes an ATP-dependent autophosphorylation at a conserved histidine residue in the kinase core, and a phosphoryl group is then transferred to a conserved aspartate residue in the receiver domain. The chain is Hybrid signal transduction histidine kinase H (dhkH) from Dictyostelium discoideum (Social amoeba).